A 175-amino-acid chain; its full sequence is Large ribosomal subunit protein uL10 (175 aa).

Belongs to the universal ribosomal protein uL10 family. Part of the ribosomal stalk of the 50S ribosomal subunit. The N-terminus interacts with L11 and the large rRNA to form the base of the stalk. The C-terminus forms an elongated spine to which L12 dimers bind in a sequential fashion forming a multimeric L10(L12)X complex.

Forms part of the ribosomal stalk, playing a central role in the interaction of the ribosome with GTP-bound translation factors. In Synechococcus sp. (strain CC9605), this protein is Large ribosomal subunit protein uL10.